A 409-amino-acid polypeptide reads, in one-letter code: Type II methyltransferase M.BsuFI (409 aa).

In terms of domain architecture, SAM-dependent MTase C5-type spans 101–402 (LTFIDLFAGI…GAMKERLLLA (302 aa)). Cysteine 170 is an active-site residue.

This sequence belongs to the class I-like SAM-binding methyltransferase superfamily. C5-methyltransferase family.

The catalysed reaction is a 2'-deoxycytidine in DNA + S-adenosyl-L-methionine = a 5-methyl-2'-deoxycytidine in DNA + S-adenosyl-L-homocysteine + H(+). In terms of biological role, a methylase, recognizes the double-stranded sequence 5'-CCGG-3', methylates C-1 on both strands, and protects the DNA from cleavage by the BsuFI endonuclease. The sequence is that of Type II methyltransferase M.BsuFI (hsdFM) from Bacillus subtilis.